Consider the following 835-residue polypeptide: Replication origin-binding protein (835 aa).

In terms of domain architecture, Helicase ATP-binding spans 54 to 215 (PGMSQTRPVT…SGLRGDENIH (162 aa)). Residue 67–74 (APMGSGKT) coordinates ATP.

This sequence belongs to the herpesviridae OriBP family. Homodimer. Interacts with the major DNA-binding protein. Interacts with the helicase/primase component 52 and the polymerase accessory protein.

Its subcellular location is the host nucleus. Functionally, functions as a docking protein to recruit essential components of the viral replication machinery to viral DNA origins. In the presence of the major DNA-binding protein, opens dsDNA leading to a conformational change in the origin that facilitates DNA unwinding and subsequent replication. The sequence is that of Replication origin-binding protein from Varicella-zoster virus (strain Oka vaccine) (HHV-3).